Reading from the N-terminus, the 348-residue chain is Caricain (348 aa).

A signal peptide spans 1-16 (MAMIPSISKLLFVAIC). Positions 17-132 (LFVHMSVSFG…EEFINEDTVN (116 aa)) are cleaved as a propeptide — activation peptide. Asn-86 is a glycosylation site (N-linked (GlcNAc...) asparagine). 3 cysteine pairs are disulfide-bonded: Cys-154-Cys-195, Cys-188-Cys-227, and Cys-285-Cys-336. The active site involves Cys-157. E64 is bound at residue Cys-157. Catalysis depends on residues His-291 and Asn-311.

Belongs to the peptidase C1 family. In terms of assembly, monomer.

It carries out the reaction Hydrolysis of proteins with broad specificity for peptide bonds, similar to those of papain and chymopapain.. Its activity is regulated as follows. Repressed by the active-site-directed cysteine protease inhibitor E64 (L-trans-epoxysuccinyl-leucylamide-(4-guanido)-butane) produced by Aspergillus japonicus. Cysteine proteinase with a high level of diversity in substrate specificity. This is Caricain from Carica papaya (Papaya).